An 831-amino-acid polypeptide reads, in one-letter code: Heat shock 70 kDa protein 15 (831 aa).

2 disordered regions span residues 502–579 and 784–831; these read EEEV…KKKV and IMTK…EGST. Residues 512 to 526 show a composition bias toward basic and acidic residues; sequence DQSEETAKMDTDKAS. 2 positions are modified to phosphoserine: Ser533 and Ser536. Positions 787–800 are enriched in low complexity; that stretch reads KPKPAAKAEAPQAK.

The protein belongs to the heat shock protein 70 (TC 1.A.33) family. HSP110/SSE subfamily.

Its subcellular location is the cytoplasm. It is found in the nucleus. In cooperation with other chaperones, Hsp70s are key components that facilitate folding of de novo synthesized proteins, assist translocation of precursor proteins into organelles, and are responsible for degradation of damaged protein under stress conditions. The polypeptide is Heat shock 70 kDa protein 15 (HSP70-15) (Arabidopsis thaliana (Mouse-ear cress)).